The sequence spans 213 residues: 24 kDa ookinete surface protein (213 aa).

Residues 1 to 28 (MNFKYSFIFLFFIQLAIRYNNAKITVDT) form the signal peptide. Positions 30–59 (CKGGKLIQMSNHYECKCPSGYALKTENTCE) constitute an EGF-like 1; truncated domain. EGF-like domains are found at residues 60–108 (PIVK…NICK) and 108–148 (KPTR…GKCT). 6 disulfides stabilise this stretch: cysteine 64/cysteine 80, cysteine 74/cysteine 94, cysteine 96/cysteine 107, cysteine 112/cysteine 122, cysteine 117/cysteine 134, and cysteine 136/cysteine 147. The EGF-like 4; truncated domain occupies 151–175 (GETKCLLKCKAAEECKLTGKHYECV). Residue asparagine 190 is the site of GPI-anchor amidated asparagine attachment. Asparagine 190 carries N-linked (GlcNAc...) asparagine glycosylation. A propeptide spans 191-213 (SSFMNGMSIISIIALLVIYVIVM) (removed in mature form).

It is found in the cell membrane. The polypeptide is 24 kDa ookinete surface protein (Plasmodium berghei (strain Anka)).